A 700-amino-acid chain; its full sequence is non-specific serine/threonine protein kinase Cdc7 (700 aa).

In terms of domain architecture, Protein kinase spans 127–644; that stretch reads FDVHSRIGNG…AEEALKHPFF (518 aa). ATP-binding positions include 133 to 141 and K163; that span reads IGNGTFSTV. The active-site Proton acceptor is the D250.

This sequence belongs to the protein kinase superfamily. Ser/Thr protein kinase family. In terms of assembly, component of the Dbf4-dependent kinase (DDK) complex consisting of Cdc7 and the Dbf4 ortholog chif. Interacts with chif (via the processed polypeptide Chiffon-A); the interaction is direct.

It carries out the reaction L-seryl-[protein] + ATP = O-phospho-L-seryl-[protein] + ADP + H(+). The enzyme catalyses L-threonyl-[protein] + ATP = O-phospho-L-threonyl-[protein] + ADP + H(+). Its activity is regulated as follows. Activated by chif. Inhibited by the synthetic compound XL413. Functionally, catalytic component of the Dbf4-dependent kinase (DDK) complex. Phosphorylates components of the pre-replication complex, including Mcm2 and, to a lesser extent, Mcm4. Phosphorylates histones, including H3 and H2B. Required for DNA replication and mitotic proliferation, including during the endoreplication and amplification stages of DNA replication in egg chamber follicle cells of the ovary. This is non-specific serine/threonine protein kinase Cdc7 from Drosophila melanogaster (Fruit fly).